The following is a 2365-amino-acid chain: TRIO and F-actin-binding protein (2365 aa).

Disordered stretches follow at residues 48–1106 (VPYC…HEPL), 1168–1554 (HRDA…SERR), 1593–1667 (LPRK…WPKI), and 1679–1751 (AGLE…TSWR). The span at 132 to 151 (SDPTSSPDSATPDDTSNSSS) shows a compositional bias: low complexity. H221 is subject to Phosphothreonine. Polar residues-rich tracts occupy residues 239 to 271 (TLTQ…QAAS), 291 to 375 (RASS…TPQR), 403 to 422 (RTSC…SPNR), 429 to 471 (RTSC…SPNR), 478 to 520 (RTSC…SPNR), 527 to 569 (RTSC…SPNR), 576 to 618 (RTSC…SPNR), 625 to 650 (RTSC…SPRT), 661 to 674 (SSPN…NPRT), 683 to 701 (RASS…TSCA), 709 to 722 (SSPN…NPRT), 745 to 785 (RTSC…SPNR), and 807 to 837 (IRAT…PKTS). The essentiel for its aggregation stretch occupies residues 324 to 348 (STQEDTPRASSTQWNTPRASSPSRS). Q457 bears the Phosphothreonine mark. The span at 839–854 (TKRDNLRPTCTQRDRT) shows a compositional bias: basic and acidic residues. 3 stretches are compositionally biased toward polar residues: residues 855-898 (QSFS…SSPH), 913-927 (PTQS…PSRS), and 945-994 (DRPQ…TSSP). Basic and acidic residues predominate over residues 1045–1056 (RAPESEPPHHEP). Positions 1195-1206 (SMESLAPSTDSL) are enriched in polar residues. Composition is skewed to basic and acidic residues over residues 1260 to 1270 (ETRHNLEREEY) and 1303 to 1319 (GRAE…RKSE). Residues 1332–1349 (SQQPSQGQSQLLRRQSSP) are compositionally biased toward low complexity. 2 stretches are compositionally biased toward basic and acidic residues: residues 1378-1387 (SPEKRPEGDR) and 1402-1411 (TPERELRTQR). A compositionally biased stretch (gly residues) spans 1452-1461 (GGLGPGGWWG). The span at 1494–1508 (WEEKPTHELPRELGK) shows a compositional bias: basic and acidic residues. Residues 1524-1534 (ESSQSWHSGTP) show a composition bias toward polar residues. Residues 1594–1606 (PRKDPAGHRDDLA) show a composition bias toward basic and acidic residues. The span at 1645 to 1664 (ALQSQSPVQLPSPACTSTQW) shows a compositional bias: polar residues. Residues 1696–1705 (PSLPELQFQP) are compositionally biased toward low complexity. A compositionally biased stretch (basic and acidic residues) spans 1724–1735 (KQADSADKRPAE). In terms of domain architecture, PH spans 1778-1887 (LNFKKGWMSI…WIEALRKTVR (110 aa)). S1796 carries the post-translational modification Phosphoserine. Disordered stretches follow at residues 1889–2017 (TSAP…LTED) and 2174–2194 (LSKT…HQSD). At R1930 the chain carries Omega-N-methylarginine. Phosphoserine occurs at positions 1949 and 1955. Positions 1965 to 1997 (TPDRLAKQEELERDLAQRSEERRKWFEATDSRT) are enriched in basic and acidic residues. 2 coiled-coil regions span residues 2062-2247 (SDGH…NQEL) and 2281-2361 (ELEV…SMRN).

As to quaternary structure, isoform 1 forms aggregates. Isoform 1 binds to TRIO and F-actin. Isoform 1 may also interact with myosin II. Interacts with HECTD3. Interacts with PJVK. Interacts with TERF1; mediates TERF1 localization to the centrosome. Ubiquitinated by HECTD3, leading to its degradation by the proteasome. Post-translationally, phosphorylation at Thr-457 by PLK1 ensures mitotic progression and is essential for accurate chromosome segregation. Phosphorylation at residues Thr-221 and Thr-457 by kinase NEK2A and PLK1 coordinates TERF1 translocation from telomere to spindle pole. As to expression, widely expressed. Highly expressed in heart and placenta. Expressed in fetal brain, retina and cochlea but is not detectable in the other tissues.

The protein resides in the nucleus. It localises to the cytoplasm. The protein localises to the cytoskeleton. Its subcellular location is the microtubule organizing center. It is found in the centrosome. The protein resides in the midbody. It localises to the chromosome. The protein localises to the telomere. Its function is as follows. Regulates actin cytoskeletal organization, cell spreading and cell contraction by directly binding and stabilizing filamentous F-actin and prevents its depolymerization. May also serve as a linker protein to recruit proteins required for F-actin formation and turnover. Essential for correct mitotic progression. Functionally, plays a pivotal role in the formation of stereocilia rootlets. The sequence is that of TRIO and F-actin-binding protein (TRIOBP) from Homo sapiens (Human).